The chain runs to 347 residues: Protein O-mannose kinase (347 aa).

The Cytoplasmic segment spans residues methionine 1–cysteine 14. A helical; Signal-anchor for type II membrane protein membrane pass occupies residues glycine 15–phenylalanine 35. Residues tyrosine 36 to leucine 347 are Lumenal-facing. The 269-residue stretch at valine 79–leucine 347 folds into the Protein kinase domain.

This sequence belongs to the protein kinase superfamily. Ser/Thr protein kinase family. STKL subfamily.

The protein localises to the endoplasmic reticulum membrane. It catalyses the reaction 3-O-[beta-D-GalNAc-(1-&gt;3)-beta-D-GlcNAc-(1-&gt;4)-alpha-D-Man]-L-Thr-[protein] + ATP = 3-O-[beta-D-GalNAc-(1-&gt;3)-beta-D-GlcNAc-(1-&gt;4)-(O-6-P-alpha-D-Man)]-Thr-[protein] + ADP + H(+). Functionally, protein O-mannose kinase that specifically mediates phosphorylation at the 6-position of an O-mannose of the trisaccharide (N-acetylgalactosamine (GalNAc)-beta-1,3-N-acetylglucosamine (GlcNAc)-beta-1,4-mannose) to generate phosphorylated O-mannosyl trisaccharide (N-acetylgalactosamine-beta-1,3-N-acetylglucosamine-beta-1,4-(phosphate-6-)mannose). Phosphorylated O-mannosyl trisaccharide is a carbohydrate structure present in alpha-dystroglycan (dag1), which is required for binding laminin G-like domain-containing extracellular proteins with high affinity. Only shows kinase activity when the GalNAc-beta-3-GlcNAc-beta-terminus is linked to the 4-position of O-mannose, suggesting that this disaccharide serves as the substrate recognition motif. The chain is Protein O-mannose kinase (pomk) from Danio rerio (Zebrafish).